We begin with the raw amino-acid sequence, 940 residues long: Inter-alpha-trypsin inhibitor heavy chain H5 (940 aa).

The N-terminal stretch at 1–16 (MLLLLGLCLGLSQCVG) is a signal peptide. Residues 35–161 (VPRQVRLLQR…KAAFFLSYEE (127 aa)) form the VIT domain. Asn97 and Asn127 each carry an N-linked (GlcNAc...) asparagine glycan. Disordered stretches follow at residues 117 to 136 (KSGD…NGEK) and 208 to 227 (SRQR…PSTV). Residue Asn231 is glycosylated (N-linked (GlcNAc...) asparagine). Residues 295–478 (NVVFVLDSSA…SQLIGFYDEI (184 aa)) enclose the VWFA domain. Residues 405–432 (DGWEAHGRGDAHPQDPQQHPRGRPRPSL) form a disordered region. Basic and acidic residues predominate over residues 407-417 (WEAHGRGDAHP). An N-linked (GlcNAc...) asparagine glycan is attached at Asn508. The segment at 541–571 (PKTDVPVGPQKAGKDVTGSPRPGGDGERNPN) is disordered. N-linked (GlcNAc...) asparagine glycans are attached at residues Asn774, Asn793, and Asn860.

It belongs to the ITIH family.

It localises to the secreted. In terms of biological role, may act as a tumor suppressor. This is Inter-alpha-trypsin inhibitor heavy chain H5 (ITIH5) from Pongo abelii (Sumatran orangutan).